The following is a 107-amino-acid chain: Antimicrobial peptide microplusin (107 aa).

The first 19 residues, 1 to 19, serve as a signal peptide directing secretion; that stretch reads MKSLLVCLVLAVVVLVASG. 3 cysteine pairs are disulfide-bonded: C25–C60, C38–C88, and C49–C54. Residues 86–107 form a disordered region; that stretch reads TDCDHSHGHEHSHGHEHGHGHH. Residues 87–107 are compositionally biased toward basic and acidic residues; the sequence is DCDHSHGHEHSHGHEHGHGHH.

The protein resides in the secreted. In terms of biological role, has bacteriostatic activity against Gram-positive bacteria, but not against Gram-negative bacteria. Has fungistatic activity against some but not all fungi. Binds and sequesters copper and iron ions. Copper-chelating is crucial for antimicrobial activity against M.luteus. This is Antimicrobial peptide microplusin from Ixodes scapularis (Black-legged tick).